The following is a 471-amino-acid chain: UDP-N-acetylmuramate--L-alanine ligase (471 aa).

114–120 contacts ATP; that stretch reads GTHGKTT.

It belongs to the MurCDEF family.

The protein localises to the cytoplasm. The enzyme catalyses UDP-N-acetyl-alpha-D-muramate + L-alanine + ATP = UDP-N-acetyl-alpha-D-muramoyl-L-alanine + ADP + phosphate + H(+). It participates in cell wall biogenesis; peptidoglycan biosynthesis. Cell wall formation. The sequence is that of UDP-N-acetylmuramate--L-alanine ligase from Methylobacterium sp. (strain 4-46).